The primary structure comprises 282 residues: tRNA pseudouridine synthase B (282 aa).

The active-site Nucleophile is the Asp-36.

This sequence belongs to the pseudouridine synthase TruB family. Type 1 subfamily.

The catalysed reaction is uridine(55) in tRNA = pseudouridine(55) in tRNA. Its function is as follows. Responsible for synthesis of pseudouridine from uracil-55 in the psi GC loop of transfer RNAs. The chain is tRNA pseudouridine synthase B from Mycoplasmopsis pulmonis (strain UAB CTIP) (Mycoplasma pulmonis).